The primary structure comprises 93 residues: Transcription factor RADIALIS (93 aa).

Residues 6–61 (GSGRPWSAKENKAFERALAVYDKDTPDRWANVARAVEGRTPEEVKKHYEILVEDIK) form the SANT domain.

As to expression, specifically expressed in the dorsal region of developing flowers.

The protein localises to the nucleus. Functionally, involved in the dorsovental asymmetry of flowers. Promotes dorsal identity. The polypeptide is Transcription factor RADIALIS (RAD) (Antirrhinum majus (Garden snapdragon)).